A 550-amino-acid chain; its full sequence is Tyrosine-protein phosphatase 1 (550 aa).

The Tyrosine-protein phosphatase domain maps to 260–539; it reads LYQKFLRLQS…KYVYDLIDSL (280 aa). A phosphoserine mark is found at S318 and S320. C470 (phosphocysteine intermediate) is an active-site residue.

The protein belongs to the protein-tyrosine phosphatase family. Non-receptor class subfamily.

It is found in the cytoplasm. The catalysed reaction is O-phospho-L-tyrosyl-[protein] + H2O = L-tyrosyl-[protein] + phosphate. Plays a role in inhibiting the onset of mitosis. Dephosphorylates sty1/spc1 and wis1/spc2/sty2. This is Tyrosine-protein phosphatase 1 (pyp1) from Schizosaccharomyces pombe (strain 972 / ATCC 24843) (Fission yeast).